Consider the following 434-residue polypeptide: (3,5-dihydroxyphenyl)acetyl-CoA 1,2-dioxygenase (434 aa).

Substrate is bound by residues D184, E190, 223–226 (HPRY), 234–239 (AGINLK), G293, 322–324 (IPG), and Q413.

It belongs to the enoyl-CoA hydratase/isomerase family. In terms of assembly, homohexamer; dimer of trimers.

The enzyme catalyses (3,5-dihydroxyphenyl)acetyl-CoA + O2 = 2-(3,5-dihydroxyphenyl)-2-oxoacetate + CoA + H(+). Its function is as follows. Involved in the biosynthesis of the nonproteinogenic amino acid monomer (S)-3,5-dihydroxyphenylglycine (Dpg) responsible of the production of vancomycin and teicoplanin antibiotics. Catalyzes the unusual conversion 3,5-dihydroxyphenylacetyl-CoA (DPA-CoA) to 3,5-dihydroxyphenylglyoxylate. DpgC performed a net four-electron oxidation of the benzylic carbon of DPA-CoA and the hydrolysis of the thioester bond to generate free CoA. It can also use phenylacetyl-CoA (PA-CoA) as substrate. The chain is (3,5-dihydroxyphenyl)acetyl-CoA 1,2-dioxygenase (dpgC) from Amycolatopsis orientalis (Nocardia orientalis).